A 543-amino-acid polypeptide reads, in one-letter code: Chaperonin GroEL (543 aa).

Residues 29–32 (TIGP), 86–90 (DGTTT), glycine 413, 478–480 (NAA), and aspartate 494 each bind ATP.

It belongs to the chaperonin (HSP60) family. In terms of assembly, forms a cylinder of 14 subunits composed of two heptameric rings stacked back-to-back. Interacts with the co-chaperonin GroES.

The protein resides in the cytoplasm. It catalyses the reaction ATP + H2O + a folded polypeptide = ADP + phosphate + an unfolded polypeptide.. In terms of biological role, together with its co-chaperonin GroES, plays an essential role in assisting protein folding. The GroEL-GroES system forms a nano-cage that allows encapsulation of the non-native substrate proteins and provides a physical environment optimized to promote and accelerate protein folding. This is Chaperonin GroEL from Limosilactobacillus fermentum (strain NBRC 3956 / LMG 18251) (Lactobacillus fermentum).